Reading from the N-terminus, the 412-residue chain is Serine hydroxymethyltransferase (412 aa).

(6S)-5,6,7,8-tetrahydrofolate contacts are provided by residues L112 and 116-118; that span reads GHL. At K221 the chain carries N6-(pyridoxal phosphate)lysine. E237 provides a ligand contact to (6S)-5,6,7,8-tetrahydrofolate.

The protein belongs to the SHMT family. In terms of assembly, homodimer. The cofactor is pyridoxal 5'-phosphate.

It localises to the cytoplasm. It carries out the reaction (6R)-5,10-methylene-5,6,7,8-tetrahydrofolate + glycine + H2O = (6S)-5,6,7,8-tetrahydrofolate + L-serine. Its pathway is one-carbon metabolism; tetrahydrofolate interconversion. It participates in amino-acid biosynthesis; glycine biosynthesis; glycine from L-serine: step 1/1. In terms of biological role, catalyzes the reversible interconversion of serine and glycine with tetrahydrofolate (THF) serving as the one-carbon carrier. This reaction serves as the major source of one-carbon groups required for the biosynthesis of purines, thymidylate, methionine, and other important biomolecules. Also exhibits THF-independent aldolase activity toward beta-hydroxyamino acids, producing glycine and aldehydes, via a retro-aldol mechanism. The sequence is that of Serine hydroxymethyltransferase from Malacoplasma penetrans (strain HF-2) (Mycoplasma penetrans).